A 295-amino-acid chain; its full sequence is Xyloglucan endotransglucosylase protein 2 (295 aa).

Residues 1-23 form the signal peptide; it reads MAMGTHFGGLWLALLCMVSATMG. Positions 24–222 constitute a GH16 domain; sequence AVPRKPVDVP…WSKAPFVASY (199 aa). Catalysis depends on Glu108, which acts as the Nucleophile. The active-site Proton donor is the Glu112. Residue Glu112 participates in xyloglucan binding. N-linked (GlcNAc...) asparagine glycosylation occurs at Asn116. Residues 125–127, 135–137, 201–202, and Gly206 contribute to the xyloglucan site; these read QTN, DRE, and DW. 2 disulfides stabilise this stretch: Cys230–Cys239 and Cys276–Cys289. Arg281 provides a ligand contact to xyloglucan.

It belongs to the glycosyl hydrolase 16 family. XTH group 1 subfamily. Post-translationally, contains at least one intrachain disulfide bond essential for its enzymatic activity. As to expression, expressed in fruit pulp.

It is found in the secreted. The protein resides in the cell wall. It localises to the extracellular space. The protein localises to the apoplast. The enzyme catalyses breaks a beta-(1-&gt;4) bond in the backbone of a xyloglucan and transfers the xyloglucanyl segment on to O-4 of the non-reducing terminal glucose residue of an acceptor, which can be a xyloglucan or an oligosaccharide of xyloglucan.. Functionally, catalyzes xyloglucan endotransglycosylation (XET). Cleaves and religates xyloglucan polymers. Does not catalyze xyloglucan endohydrolysis (XEH). Probably involved in cell wall restructuring during fruit ripening and postharvest fruit softening. The polypeptide is Xyloglucan endotransglucosylase protein 2 (Diospyros kaki (Kaki persimmon)).